The primary structure comprises 282 residues: MATYLIGDVHGCYDELIALLQQVEFMPDTDTLWLTGDLVARGPGSLDVLRYVKSLGNSVRLVLGNHDLHLLAVFAGISRNKPKDRLTPLLEAPDADELLNWLRRQPLLQVDEEKKLVMAHAGITPQWDLQTAKECARDVEAVLSSDSYPFFLDAMYGDMPNNWSPELSGLARLRFITNAFTRMRYCFPNGQLDMYSKASPENAPAPLKPWFAIPGPVSEAYSIAFGHWASLEGKGTPEGIYALDTGCCWGGELTCLRWEDKQYFVQPSNRQMDMGEGEAVNA.

This sequence belongs to the Ap4A hydrolase family.

The enzyme catalyses P(1),P(4)-bis(5'-adenosyl) tetraphosphate + H2O = 2 ADP + 2 H(+). Hydrolyzes diadenosine 5',5'''-P1,P4-tetraphosphate to yield ADP. This is Bis(5'-nucleosyl)-tetraphosphatase, symmetrical from Salmonella paratyphi A (strain ATCC 9150 / SARB42).